Reading from the N-terminus, the 1453-residue chain is Collagen alpha-1(I) chain (1453 aa).

The first 22 residues, 1–22, serve as a signal peptide directing secretion; the sequence is MFSFVDLRLLLLLGATALLTHG. Positions 23 to 151 are cleaved as a propeptide — N-terminal propeptide; it reads QEDIPEVSCI…PPGLGGNFAS (129 aa). The VWFC domain maps to 29-87; the sequence is VSCIHNGLRVPNGETWKPDVCLICICHNGTAVCDGVLCKEDLDCPNPQKREGECCPFCP. Residue Asn-56 is glycosylated (N-linked (GlcNAc...) asparagine). The interval 97–1206 is disordered; the sequence is VIGVEGPKGD…KSQDGGRYYR (1110 aa). 2 stretches are compositionally biased toward pro residues: residues 109-118 and 128-143; these read PQGPRGPVGP and PGLPGPPGPPGPPGPP. Gln-152 carries the post-translational modification Pyrrolidone carboxylic acid. Residues 152–167 are nonhelical region (N-terminal); that stretch reads QMSYGYDEKSAGVSVP. Lys-160 carries the allysine modification. Ser-161 is subject to Phosphoserine. Residues 168–1181 form a triple-helical region region; it reads GPMGPSGPRG…PGPPGPPGPP (1014 aa). Pro-179, Pro-182, Pro-185, Pro-194, Pro-197, Pro-200, Pro-215, Pro-230, Pro-236, Pro-245, and Pro-251 each carry 4-hydroxyproline. Over residues 187–206 the composition is skewed to low complexity; it reads PQGFQGPPGEPGEPGASGPM. The segment covering 218–232 has biased composition (basic and acidic residues); the sequence is NGDDGEAGKPGRPGE. Lys-254 is modified (5-hydroxylysine; alternate). O-linked (Gal...) hydroxylysine; alternate glycosylation occurs at Lys-254. A Phosphoserine modification is found at Ser-260. A 4-hydroxyproline mark is found at Pro-278, Pro-281, Pro-287, Pro-296, and Pro-302. The segment covering 307–320 has biased composition (low complexity); that stretch reads SAGARGNDGAVGAA. Over residues 322 to 334 the composition is skewed to pro residues; sequence PPGPTGPTGPPGF. Pro-323, Pro-332, Pro-335, Pro-362, Pro-365, Pro-377, Pro-383, Pro-392, Pro-398, Pro-401, and Pro-416 each carry 4-hydroxyproline. A compositionally biased stretch (low complexity) spans 335-361; the sequence is PGAAGAKGEAGPQGARGSEGPQGVRGE. Over residues 368-418 the composition is skewed to low complexity; it reads AGAAGPAGNPGADGQPGAKGANGAPGIAGAPGFPGARGPSGPQGPSGAPGP. Lys-419 carries the 5-hydroxylysine modification. 4-hydroxyproline is present on residues Pro-425, Pro-428, Pro-440, Pro-449, Pro-464, Pro-470, Pro-479, and Pro-485. Positions 474 to 483 are enriched in gly residues; that stretch reads GERGGPGSRG. 5-hydroxylysine is present on Lys-494. A 4-hydroxyproline mark is found at Pro-503, Pro-512, Pro-518, Pro-524, Pro-533, Pro-536, Pro-545, Pro-554, Pro-560, Pro-572, Pro-581, Pro-590, Pro-593, Pro-611, Pro-629, Pro-635, Pro-641, Pro-647, Pro-653, Pro-659, Pro-671, Pro-680, Pro-692, Pro-704, Pro-707, Pro-713, Pro-719, and Pro-728. Over residues 527-566 the composition is skewed to low complexity; the sequence is KGLTGSPGSPGPDGKTGPPGPAGQDGRPGPAGPPGARGQA. Residues 623–650 show a composition bias toward low complexity; it reads QGPAGSPGFQGLPGPAGPPGEAGKPGEQ. 2 stretches are compositionally biased toward low complexity: residues 685 to 695 and 703 to 716; these read PRGNNGAPGND and APGAPGSQGAPGLQ. The Cell attachment site motif lies at 734–736; sequence RGD. Lys-740 is modified (5-hydroxylysine). 4-hydroxyproline is present on residues Pro-746, Pro-761, and Pro-767. Residues 773–787 are compositionally biased toward low complexity; the sequence is TGPSGPAGPTGARGA. Ser-776 is subject to Phosphoserine. 8 positions are modified to 4-hydroxyproline: Pro-788, Pro-794, Pro-797, Pro-806, Pro-812, Pro-830, Pro-839, and Pro-848. Residues 800–815 are compositionally biased toward low complexity; sequence AGFAGPPGADGQPGAK. A compositionally biased stretch (pro residues) spans 829–841; sequence PPGPAGPAGPPGP. The segment covering 842 to 872 has biased composition (low complexity); sequence IGNVGAPGPKGSRGAAGPPGATGFPGAAGRV. Lys-851 carries the post-translational modification 5-hydroxylysine. 2 positions are modified to 4-hydroxyproline: Pro-860 and Pro-866. Pro-874 is modified (3-hydroxyproline). Residues Pro-875, Pro-884, Pro-887, Pro-908, Pro-917, Pro-926, Pro-935, Pro-953, Pro-962, Pro-965, Pro-971, Pro-986, Pro-992, Pro-998, Pro-1007, and Pro-1013 each carry the 4-hydroxyproline modification. Positions 901-910 are enriched in low complexity; the sequence is ETGPAGRPGE. A compositionally biased stretch (low complexity) spans 920-935; the sequence is AGEKGSPGADGPAGSP. Pro residues predominate over residues 985–995; the sequence is PPGPMGPPGLA. Over residues 997–1012 the composition is skewed to low complexity; it reads PPGESGREGSPGAEGS. At Lys-1022 the chain carries 5-hydroxylysine. The span at 1031–1046 shows a compositional bias: pro residues; sequence AGPPGAPGAPGAPGPV. Residues Pro-1034, Pro-1037, and Pro-1040 each carry the 4-hydroxyproline modification. Residues 1067-1081 show a composition bias toward low complexity; it reads IGPAGARGPAGPQGP. The Cell attachment site signature appears at 1082–1084; it reads RGD. Residues 1082–1096 show a composition bias toward basic and acidic residues; the sequence is RGDKGETGEQGDRGI. Lys-1085 carries the 5-hydroxylysine modification. 5-hydroxylysine; alternate is present on Lys-1097. Lys-1097 is a glycosylation site (O-linked (Gal...) hydroxylysine; alternate). Residues 1102–1148 show a composition bias toward low complexity; that stretch reads FSGLQGPPGSPGSPGEQGPSGASGPAGPRGPPGSAGSPGKDGLNGLP. 4-hydroxyproline occurs at positions 1109, 1112, 1115, 1133, and 1148. Pro-1153 is subject to 3-hydroxyproline. Pro-1154 bears the 4-hydroxyproline mark. The segment covering 1166–1181 has biased composition (pro residues); that stretch reads AGPPGPPGPPGPPGPP. Pro-1168 is modified (3-hydroxyproline). Residue Pro-1169 is modified to 4-hydroxyproline. At Pro-1171 the chain carries 3-hydroxyproline. Pro-1172 bears the 4-hydroxyproline mark. Pro-1174 carries the post-translational modification 3-hydroxyproline. 4-hydroxyproline occurs at positions 1175, 1178, and 1181. The tract at residues 1176-1186 is major antigenic determinant (of neutral salt-extracted rat skin collagen); that stretch reads GPPGPPSGGYD. The segment at 1182–1207 is nonhelical region (C-terminal); that stretch reads SGGYDFSFLPQPPQEKSQDGGRYYRA. At Lys-1197 the chain carries Allysine. Over residues 1197–1206 the composition is skewed to basic and acidic residues; it reads KSQDGGRYYR. Residues 1208 to 1453 constitute a propeptide, C-terminal propeptide; the sequence is DDANVVRDRD…GMDIGPACFV (246 aa). Residues 1218–1453 form the Fibrillar collagen NC1 domain; that stretch reads LEVDTTLKSL…GMDIGPACFV (236 aa). Disulfide bonds link Cys-1248–Cys-1280, Cys-1288–Cys-1451, and Cys-1359–Cys-1404. The Ca(2+) site is built by Asp-1266, Asn-1268, Gln-1269, Cys-1271, and Asp-1274. A glycan (N-linked (GlcNAc...) asparagine) is linked at Asn-1354.

This sequence belongs to the fibrillar collagen family. Trimers of one alpha 2(I) and two alpha 1(I) chains. Interacts with MRC2. Interacts with TRAM2. Interacts with MFAP4 in a Ca (2+)-dependent manner. Post-translationally, contains mostly 4-hydroxyproline. Proline residues at the third position of the tripeptide repeating unit (G-X-Y) are hydroxylated in some or all of the chains. Contains 3-hydroxyproline at a few sites. This modification occurs on the first proline residue in the sequence motif Gly-Pro-Hyp, where Hyp is 4-hydroxyproline. In terms of processing, lysine residues at the third position of the tripeptide repeating unit (G-X-Y) are 5-hydroxylated in some or all of the chains. Post-translationally, O-glycosylated on hydroxylated lysine residues. The O-linked glycan consists of a Glc-Gal disaccharide. As to expression, forms the fibrils of tendon, ligaments and bones. In bones the fibrils are mineralized with calcium hydroxyapatite.

Its subcellular location is the secreted. It localises to the extracellular space. The protein resides in the extracellular matrix. Functionally, type I collagen is a member of group I collagen (fibrillar forming collagen). In Rattus norvegicus (Rat), this protein is Collagen alpha-1(I) chain (Col1a1).